The chain runs to 132 residues: Tail assembly protein Gp24 (132 aa).

The protein belongs to the L5likevirus tail assembly protein family. In terms of assembly, interacts with tail assembly protein Gp25 and tape measure protein.

Its function is as follows. Promotes tail assembly by creating a scaffold for the tail tube proteins. The tail assembly proteins Gp24 and Gp25 would wrap the linear tape measure protein to create a tail assembly scaffold. It would allow polymerization of tail tube protein during which Gp24 and Gp25 are released and therefore are absent from the mature virion. The tail assembly protein Gp25 is produced by a rare -1 ribosomal frameshift. The ratio Gp24/Gp25 is important for proper tail assembly. In Mycobacterium (Mycobacteriophage L5), this protein is Tail assembly protein Gp24 (24).